The chain runs to 561 residues: Urocanate hydratase (561 aa).

Residues 52–53 (GG), glutamine 130, 176–178 (GMG), glutamate 196, arginine 201, 242–243 (NA), 263–267 (QTSAH), 273–274 (YL), and tyrosine 322 contribute to the NAD(+) site. The active site involves cysteine 410. Glycine 492 lines the NAD(+) pocket.

Belongs to the urocanase family. NAD(+) serves as cofactor.

The protein localises to the cytoplasm. It catalyses the reaction 4-imidazolone-5-propanoate = trans-urocanate + H2O. It functions in the pathway amino-acid degradation; L-histidine degradation into L-glutamate; N-formimidoyl-L-glutamate from L-histidine: step 2/3. In terms of biological role, catalyzes the conversion of urocanate to 4-imidazolone-5-propionate. This is Urocanate hydratase from Salmonella newport (strain SL254).